Here is a 218-residue protein sequence, read N- to C-terminus: Ribonuclease T (218 aa).

An Exonuclease domain is found at 22 to 196; that stretch reads VVVDVETAGF…YDAMKTAELF (175 aa). Asp-25, Glu-27, His-183, and Asp-188 together coordinate Mg(2+). Catalysis depends on His-183, which acts as the Proton donor/acceptor.

Belongs to the RNase T family. In terms of assembly, homodimer. The cofactor is Mg(2+).

Functionally, trims short 3' overhangs of a variety of RNA species, leaving a one or two nucleotide 3' overhang. Responsible for the end-turnover of tRNA: specifically removes the terminal AMP residue from uncharged tRNA (tRNA-C-C-A). Also appears to be involved in tRNA biosynthesis. This is Ribonuclease T from Hahella chejuensis (strain KCTC 2396).